An 8384-amino-acid polypeptide reads, in one-letter code: Mucin-19 (8384 aa).

An N-terminal signal peptide occupies residues 1 to 21 (MKLILWYLVVALWCFFKDVEA). Disordered regions lie at residues 33–197 (AASR…YGAG), 222–247 (SKAD…PDAG), 279–305 (GDTG…IDLG), and 332–467 (QEGF…PEAT). Low complexity-rich tracts occupy residues 35-48 (SRSG…SSSG) and 88-98 (GGFFNSSSSSG). The segment covering 169-184 (DKSRERWDAGNSRSED) has biased composition (basic and acidic residues). Residues 187–197 (ADSTNTRYGAG) show a composition bias toward polar residues. Over residues 279 to 299 (GDTGISSKTVEGNQTSSSGGS) the composition is skewed to polar residues. The span at 359–369 (GSDSSSSGDSS) shows a compositional bias: low complexity. The span at 370-381 (ARNGFENSSGIS) shows a compositional bias: polar residues. 2 stretches are compositionally biased toward low complexity: residues 424–435 (SDSGGNTWSSDS) and 443–452 (TSSSEYSTSG). 3 VWFD domains span residues 478–649 (GEIS…QHCN), 815–995 (GRCK…SSCI), and 1274–1447 (TICH…QECS). Intrachain disulfides connect Cys-502/Cys-648, Cys-817/Cys-952, Cys-838/Cys-994, Cys-857/Cys-865, Cys-1276/Cys-1411, Cys-1298/Cys-1446, Cys-1307/Cys-1408, and Cys-1323/Cys-1330. 27 disordered regions span residues 1680-1699 (TSSS…PFTT), 1732-2464 (AGTT…KSPG), 2484-2526 (LESE…TEGS), 2540-2827 (RPLD…MTGT), 2850-2917 (STVG…LGTI), 2984-3027 (VTTG…SGTT), 3075-3368 (GTTG…GKTG), 3386-3428 (TTRL…GKTG), 3585-3628 (ETTG…TNGL), 3667-3736 (GSSA…TGLP), 4105-4147 (TGSS…NGLS), 4187-4251 (SAGV…AEVT), 4315-4390 (GLSA…SARV), 4414-4455 (TGSS…TNGQ), 4510-4583 (TGTT…TGLP), 4790-4843 (TGTT…TGLP), 4895-4930 (SSAG…AGVT), 5130-5161 (TGTT…GVTG), 5429-5452 (VTGT…VTGK), 5464-5494 (GPSA…GTTG), 5880-5918 (GTSI…SAEM), 6069-6403 (TGKT…STES), 6440-6918 (GRAT…ETTK), 6953-7223 (GTSE…TGFK), 7250-7749 (SFST…SKTG), 7783-7975 (KNGS…EAGS), and 8020-8133 (SGRS…VSQP). Composition is skewed to low complexity over residues 1732–1746 (AGTT…TGAA), 1772–1813 (PGEA…TTGP), and 1820–1833 (GATS…EGMS). A compositionally biased stretch (polar residues) spans 1835 to 1860 (VTGQSLGSTAGSDSEITAKTSFTGSS). Residues 1868 to 1879 (PSPGSPGHFSGG) are compositionally biased toward low complexity. The span at 1880-1905 (TTEWGNVATTGAAGENTSGALGSTEG) shows a compositional bias: polar residues. Residues 1909–1921 (ATTSAGSGNTAGT) are compositionally biased toward low complexity. A compositionally biased stretch (polar residues) spans 1950–1968 (GSSTPGEADIGNTSFGKSG). Low complexity-rich tracts occupy residues 1969–1983 (TPTV…SPVS) and 2013–2049 (GGKI…SGPS). The segment covering 2055–2100 (NYGQSSEIPGTIKSSSDVSGTMGQSDTTSGPSVAVTRTSEQSSGVT) has biased composition (polar residues). Composition is skewed to low complexity over residues 2132–2147 (TTGS…GPSS) and 2159–2170 (GSGTSGQSVTGS). 2 stretches are compositionally biased toward polar residues: residues 2171–2186 (RATG…TVSF) and 2209–2225 (GSGT…TTRL). 2 stretches are compositionally biased toward low complexity: residues 2233–2246 (TESS…TTPS) and 2280–2313 (SGPS…TKPS). The segment at 2238–6086 (GVTGTTTPSA…GVTGTTGLSA (3849 aa)) is approximate repeats of G-V-T-G-T-T-G-P-S-A. Composition is skewed to polar residues over residues 2316–2332 (RTGT…TTEP) and 2354–2372 (ATES…TTIP). Over residues 2403–2419 (SSGGSGATRSSGGGMGT) the composition is skewed to gly residues. Residues 2420–2441 (TGQSTARSETTGPLFGLTGTFG) show a composition bias toward low complexity. Polar residues predominate over residues 2442 to 2460 (QSATVTGTSSNSAGVTTPE). Composition is skewed to low complexity over residues 2512–2526 (SAGE…TEGS), 2545–2571 (GSGT…TTRK), and 2578–2589 (TTGLSGLTGTSG). Polar residues-rich tracts occupy residues 2595–2610 (TGTS…TSEK) and 2638–2653 (TRPS…QSAR). The segment covering 2654-2681 (VTETVGASAGVTGTTGPSTEGSGATGPS) has biased composition (low complexity). Composition is skewed to polar residues over residues 2695–2748 (SGTT…TGTT) and 2755–2770 (TETT…TTGP). A compositionally biased stretch (low complexity) spans 2787 to 2799 (ATRSSGGETETTG). Polar residues-rich tracts occupy residues 2800 to 2827 (QSAV…MTGT), 2850 to 2859 (STVGLETTRP), and 2874 to 2892 (AQTT…QSAR). Residues 2894–2910 (TGASGPSVGVTGTTGPA) show a composition bias toward low complexity. The segment covering 2984 to 2998 (VTTGPSVTGVETTAK) has biased composition (polar residues). The span at 2999–3027 (TTSGGLSTTISSVGGTGTTGQSPERSGTT) shows a compositional bias: low complexity. Polar residues predominate over residues 3099–3109 (PSITGSGTTRP). Residues 3114–3130 (SWTAGTSSGGHSTTSPS) are compositionally biased toward low complexity. Residues 3131–3159 (VRGTETTGQSAAESVTTGPVTGYTETSGP) are compositionally biased toward polar residues. The span at 3172-3188 (TVTQTTGSSAAVSGTTV) shows a compositional bias: low complexity. Over residues 3189 to 3224 (QSLTVSGTTRPSSGQTEITGSSVKESGTTESSAVRS) the composition is skewed to polar residues. Residues 3225–3277 (GTTGPTAGVTGTNGPSSAGVTGITGSSPGVTGTTGSSPGVTGTTGSSARSGTS) are compositionally biased toward low complexity. Polar residues-rich tracts occupy residues 3303-3317 (ITGT…TGTT) and 3324-3362 (TGTT…SSAG). A compositionally biased stretch (low complexity) spans 3390–3417 (SAGVTGTTGPSPGVTGTTGTPAGVTGTT). 2 stretches are compositionally biased toward polar residues: residues 3702–3728 (VTGT…TTGP) and 4105–4116 (TGSSARSGTSIP). Residues 4117 to 4126 (SVGETGTTRT) show a composition bias toward low complexity. Residues 4320–4346 (VTGTTRPSAGVTGTTGQSAEVTGTTEP) are compositionally biased toward polar residues. 2 stretches are compositionally biased toward low complexity: residues 4347 to 4385 (SAGL…GTTG) and 4414 to 4426 (TGSS…STPS). 2 stretches are compositionally biased toward low complexity: residues 5469-5494 (VTGT…GTTG) and 5889-5903 (TGTT…TTTG). 3 stretches are compositionally biased toward polar residues: residues 5908 to 5918 (ITGTNGLSAEM), 6071 to 6103 (KTRS…TTKT), and 6111 to 6121 (TRPSAGITATT). Residues 6156–6168 (TTTGTTGVTTGTT) are compositionally biased toward low complexity. 2 stretches are compositionally biased toward polar residues: residues 6217–6248 (EVST…TATT) and 6257–6275 (APGS…SAST). Low complexity predominate over residues 6284 to 6295 (TGSTRGVRTTGS). Composition is skewed to polar residues over residues 6303 to 6323 (GEFS…TTLT) and 6336 to 6346 (ESTTSLPQSAK). Low complexity predominate over residues 6378-6389 (SGTTISSGGSHT). Polar residues-rich tracts occupy residues 6440–6457 (GRAT…TSQA) and 6470–6503 (TTIT…TTYI). The span at 6507-6523 (GTTRGGLATATTGAFSG) shows a compositional bias: low complexity. A compositionally biased stretch (polar residues) spans 6560–6571 (TTFTSGGSHTEA). A compositionally biased stretch (low complexity) spans 6581 to 6597 (TGTESRAATTRAAPGTT). A compositionally biased stretch (polar residues) spans 6599–6608 (VPGSSNTGAT). The segment covering 6612-6628 (GGSATTRGRITTATTGA) has biased composition (low complexity). Composition is skewed to polar residues over residues 6669 to 6680 (RITSGGSYTATT) and 6689 to 6698 (APGSSNTGAT). Over residues 6707–6718 (TRGRITTATTGA) the composition is skewed to low complexity. A compositionally biased stretch (polar residues) spans 6752–6766 (TTLTGDRSSTGSESR). Residues 6767-6781 (TATTGVAPGTTVAPG) are compositionally biased toward low complexity. Polar residues predominate over residues 6794–6817 (SGTTNIGRATGATTSIVGSDTSQA). Low complexity predominate over residues 6827 to 6842 (SPGASSTSQSSRPGTS). The segment covering 6843–6875 (VTPDSSASESETVTTKEFSGTTAISRTSHTGTP) has biased composition (polar residues). Over residues 6887–6901 (TATTGVAPGTTVAPG) the composition is skewed to low complexity. 2 stretches are compositionally biased toward polar residues: residues 6902 to 6911 (SSNTEATTSV) and 6953 to 6964 (GTSEVAPSTTVA). A compositionally biased stretch (low complexity) spans 6966–6994 (GSFSTAATTSPGASGTTGVTTTTKTTTSL). Residues 7006 to 7041 (SATTGAPGSRTGTAGVPSATTVSPGSSNSEATTSVG) are compositionally biased toward polar residues. A compositionally biased stretch (low complexity) spans 7045 to 7074 (KTGAETITEATTSTEGTGTSGTGFKTGTSE). Polar residues predominate over residues 7085–7094 (SFSTAATTSP). The span at 7095–7112 (GASGMTGVTTTTKTTTSL) shows a compositional bias: low complexity. A compositionally biased stretch (polar residues) spans 7143 to 7158 (TRVTPGSSNSEATTSV). Low complexity-rich tracts occupy residues 7201-7215 (SGSS…TEGT) and 7250-7276 (SFST…TTSL). The segment covering 7293 to 7311 (SGTTVAPGSSNSEATTSVG) has biased composition (polar residues). Low complexity predominate over residues 7379–7397 (TTSTKGTGTSGTGFKTGTS). Over residues 7403 to 7421 (TTVSPGSFSTATISPGASR) the composition is skewed to polar residues. Residues 7422–7435 (TTGAAPAAETTTSL) are compositionally biased toward low complexity. Residues 7465–7483 (SATTIAPGSSNSEATTSLG) are compositionally biased toward polar residues. The segment covering 7525–7537 (PLGGASGTSGGYV) has biased composition (gly residues). 2 stretches are compositionally biased toward polar residues: residues 7544 to 7557 (PTTS…SRTI) and 7571 to 7596 (AGTS…TSPG). Residues 7600–7613 (MTGVRTTSKTTTSL) show a composition bias toward low complexity. 2 stretches are compositionally biased toward polar residues: residues 7642–7669 (SSRT…SGTG) and 7698–7708 (SFSTAATTSPG). The span at 7715 to 7732 (TGPTAETTTFLGGSSTTG) shows a compositional bias: low complexity. The segment covering 7783-7811 (KNGSMTTALGSQLSSSQTVIPGSSGTISH) has biased composition (polar residues). The segment covering 7812 to 7828 (TTVAPGSSVTGTTTGAS) has biased composition (low complexity). Over residues 7830 to 7851 (DQVTGSKTGTTGVALSTTVAPG) the composition is skewed to polar residues. Residues 7852-7861 (SSSTEATTST) show a composition bias toward low complexity. The span at 7862-7891 (GVHRTTVVGQKTGATTRGSAKQGTRSTIEA) shows a compositional bias: polar residues. The segment covering 7892–7917 (TTSFRGTGTTGSGMNTGTTGVVSGNT) has biased composition (low complexity). Residues 7918 to 7934 (ISPSSFNTEATSGTSER) show a composition bias toward polar residues. Residues 7938-7952 (GSEIGTTGIVSGTTV) are compositionally biased toward low complexity. Composition is skewed to polar residues over residues 7953-7965 (APGS…TTSL), 8020-8040 (SGRS…SGTT), 8048-8081 (TGNT…SISG), and 8110-8120 (ETGVQTGSTLV). A VWFC domain is found at 8159–8225 (PVCHGPLGEE…DTCCEIGYCE (67 aa)). Disulfide bonds link Cys-8288/Cys-8339, Cys-8306/Cys-8353, Cys-8315/Cys-8369, and Cys-8319/Cys-8371. The CTCK domain maps to 8288 to 8376 (CKNNCRSSLV…TTCSCLDICQ (89 aa)).

In terms of tissue distribution, expressed corneal epithelial cells, conjunctival goblet and epithelial cells and lacrimal gland cells (at protein level). Expressed by mucous cells of the submandibular gland and submucosal gland of the trachea. Expressed by middle ear epithelial cells.

It localises to the secreted. Its function is as follows. May function in ocular mucus homeostasis. The protein is Mucin-19 (MUC19) of Homo sapiens (Human).